The chain runs to 1053 residues: Sal-like protein 4 (1053 aa).

Residues 1-62 (MSRRKQAKPQ…DEVASEDEAT (62 aa)) are disordered. Residues 20 to 46 (EQQPQQQTPEFADAAPAAPAAGELGAP) show a composition bias toward low complexity. Serine 57 is modified (phosphoserine). The C2H2-type 1; atypical zinc-finger motif lies at 72–94 (HVCEKCCAEFFSISEFLEHKKNC). A disordered region spans residues 116–149 (SGAVLSHQPTSPGSKDCHRENGGSSEDMKEKPDA). Positions 130-149 (KDCHRENGGSSEDMKEKPDA) are enriched in basic and acidic residues. Lysine 156 is covalently cross-linked (Glycyl lysine isopeptide (Lys-Gly) (interchain with G-Cter in SUMO1); alternate). Residue lysine 156 forms a Glycyl lysine isopeptide (Lys-Gly) (interchain with G-Cter in SUMO2); alternate linkage. Residues lysine 175, lysine 190, and lysine 290 each participate in a glycyl lysine isopeptide (Lys-Gly) (interchain with G-Cter in SUMO2) cross-link. Residue serine 307 is modified to Phosphoserine. Lysine 316 participates in a covalent cross-link: Glycyl lysine isopeptide (Lys-Gly) (interchain with G-Cter in SUMO1); alternate. Residue lysine 316 forms a Glycyl lysine isopeptide (Lys-Gly) (interchain with G-Cter in SUMO2); alternate linkage. A Glycyl lysine isopeptide (Lys-Gly) (interchain with G-Cter in SUMO2) cross-link involves residue lysine 372. Lysine 374 is covalently cross-linked (Glycyl lysine isopeptide (Lys-Gly) (interchain with G-Cter in SUMO1); alternate). Residue lysine 374 forms a Glycyl lysine isopeptide (Lys-Gly) (interchain with G-Cter in SUMO2); alternate linkage. C2H2-type zinc fingers lie at residues 382-404 (HKCK…LRSH) and 410-432 (FVCS…FHRH). A Glycyl lysine isopeptide (Lys-Gly) (interchain with G-Cter in SUMO2) cross-link involves residue lysine 436. Residues 483–496 (VGLPQNLSSGTNPK) are compositionally biased toward polar residues. Residues 483-546 (VGLPQNLSSG…QGSGTPEPGS (64 aa)) are disordered. Phosphothreonine is present on threonine 541. Residue lysine 550 forms a Glycyl lysine isopeptide (Lys-Gly) (interchain with G-Cter in SUMO2) linkage. 2 consecutive C2H2-type zinc fingers follow at residues 566–588 (NECL…YRTH) and 594–616 (FQCK…LGVH). Residues lysine 597 and lysine 623 each participate in a glycyl lysine isopeptide (Lys-Gly) (interchain with G-Cter in SUMO2) cross-link. A C2H2-type 6 zinc finger spans residues 626-648 (HSCPICQKKFTNAVMLQQHIRMH). Disordered regions lie at residues 694 to 714 (EEVS…PLPS), 736 to 776 (VGPA…QSRS), and 788 to 828 (LSPA…LPST). Low complexity predominate over residues 698–708 (SQEAPSSSSKV). Composition is skewed to polar residues over residues 743 to 776 (LQRQ…QSRS) and 788 to 797 (LSPANSQAES). Serine 776 and serine 789 each carry phosphoserine. Basic and acidic residues predominate over residues 810–821 (ESSENSRTEMEG). Lysine 838 is covalently cross-linked (Glycyl lysine isopeptide (Lys-Gly) (interchain with G-Cter in SUMO1); alternate). Lysine 838 participates in a covalent cross-link: Glycyl lysine isopeptide (Lys-Gly) (interchain with G-Cter in SUMO2); alternate. At serine 852 the chain carries Phosphoserine. Residues 870 to 892 (HGCTRCGKNFSSASALQIHERTH) form a C2H2-type 7 zinc finger. A Glycyl lysine isopeptide (Lys-Gly) (interchain with G-Cter in SUMO2) cross-link involves residue lysine 896. The C2H2-type 8 zinc finger occupies 898 to 920 (FVCNICGRAFTTKGNLKVHYMTH). Glycyl lysine isopeptide (Lys-Gly) (interchain with G-Cter in SUMO2) cross-links involve residues lysine 932 and lysine 947. A disordered region spans residues 1018 to 1039 (GSQSGISADVEKPSATDGVPKH). Serine 1019 is subject to Phosphoserine.

It belongs to the sal C2H2-type zinc-finger protein family. As to quaternary structure, interacts with POU5F1/OCT4. Interacts with NANOG. Interacts with BEND3. Interacts with NSD2 (via PHD-type zinc fingers 1, 2 and 3). Interacts with NRBP1. In terms of processing, isoform SALL4B exists primarily as a ubiquitinated form. Sumoylation with both SUMO1 and SUMO2 regulates the stability, subcellular localization, transcriptional activity, and may reduce interaction with POU5F1/OCT4. Expressed in testis. Constitutively expressed in acute myeloid leukemia (AML).

Its subcellular location is the cytoplasm. It is found in the nucleus. Its function is as follows. Transcription factor with a key role in the maintenance and self-renewal of embryonic and hematopoietic stem cells. This Homo sapiens (Human) protein is Sal-like protein 4 (SALL4).